Consider the following 102-residue polypeptide: Integration host factor subunit beta (102 aa).

This sequence belongs to the bacterial histone-like protein family. As to quaternary structure, heterodimer of an alpha and a beta chain.

In terms of biological role, this protein is one of the two subunits of integration host factor, a specific DNA-binding protein that functions in genetic recombination as well as in transcriptional and translational control. The polypeptide is Integration host factor subunit beta (Rhizobium rhizogenes (strain K84 / ATCC BAA-868) (Agrobacterium radiobacter)).